Here is a 92-residue protein sequence, read N- to C-terminus: Small ribosomal subunit protein bS20 (92 aa).

Positions 1-28 (MANTASAEKRNRQAQKRRARNVQVRTGV) are disordered.

This sequence belongs to the bacterial ribosomal protein bS20 family.

Its function is as follows. Binds directly to 16S ribosomal RNA. This chain is Small ribosomal subunit protein bS20, found in Anaeromyxobacter dehalogenans (strain 2CP-C).